Consider the following 467-residue polypeptide: UDP-N-acetylmuramate--L-alanine ligase (467 aa).

An ATP-binding site is contributed by 112-118; it reads GTHGKTT.

It belongs to the MurCDEF family.

It is found in the cytoplasm. The enzyme catalyses UDP-N-acetyl-alpha-D-muramate + L-alanine + ATP = UDP-N-acetyl-alpha-D-muramoyl-L-alanine + ADP + phosphate + H(+). Its pathway is cell wall biogenesis; peptidoglycan biosynthesis. Cell wall formation. This chain is UDP-N-acetylmuramate--L-alanine ligase, found in Paraburkholderia xenovorans (strain LB400).